The primary structure comprises 435 residues: Tryptophan synthase beta chain (435 aa).

Position 92 is an N6-(pyridoxal phosphate)lysine (lysine 92).

The protein belongs to the TrpB family. In terms of assembly, tetramer of two alpha and two beta chains. Pyridoxal 5'-phosphate is required as a cofactor.

It catalyses the reaction (1S,2R)-1-C-(indol-3-yl)glycerol 3-phosphate + L-serine = D-glyceraldehyde 3-phosphate + L-tryptophan + H2O. It functions in the pathway amino-acid biosynthesis; L-tryptophan biosynthesis; L-tryptophan from chorismate: step 5/5. Functionally, the beta subunit is responsible for the synthesis of L-tryptophan from indole and L-serine. This Albidiferax ferrireducens (strain ATCC BAA-621 / DSM 15236 / T118) (Rhodoferax ferrireducens) protein is Tryptophan synthase beta chain.